Here is a 498-residue protein sequence, read N- to C-terminus: U4/U6 small nuclear ribonucleoprotein Prp31 (498 aa).

The disordered stretch occupies residues methionine 1–aspartate 24. Positions leucine 7–aspartate 24 are enriched in acidic residues. Coiled-coil stretches lie at residues glutamate 84–lysine 119 and aspartate 180–isoleucine 214. The Nop domain occupies isoleucine 214–glutamate 332. The segment at proline 333–arginine 356 is disordered. The Nuclear localization signal (NLS) motif lies at arginine 350–glutamate 363.

This sequence belongs to the PRP31 family. In terms of assembly, identified in the spliceosome B complex. Component of the U4/U6-U5 tri-snRNP complex. Component of some MLL1/MLL complex.

Its subcellular location is the nucleus. It is found in the nucleus speckle. It localises to the cajal body. Its function is as follows. Involved in pre-mRNA splicing as component of the spliceosome. Required for the assembly of the U4/U5/U6 tri-snRNP complex, one of the building blocks of the spliceosome. The sequence is that of U4/U6 small nuclear ribonucleoprotein Prp31 (prpf31) from Xenopus laevis (African clawed frog).